The following is a 200-amino-acid chain: NADH-quinone oxidoreductase subunit C (200 aa).

This sequence belongs to the complex I 30 kDa subunit family. NDH-1 is composed of 14 different subunits. Subunits NuoB, C, D, E, F, and G constitute the peripheral sector of the complex.

It localises to the cell inner membrane. The catalysed reaction is a quinone + NADH + 5 H(+)(in) = a quinol + NAD(+) + 4 H(+)(out). Its function is as follows. NDH-1 shuttles electrons from NADH, via FMN and iron-sulfur (Fe-S) centers, to quinones in the respiratory chain. The immediate electron acceptor for the enzyme in this species is believed to be ubiquinone. Couples the redox reaction to proton translocation (for every two electrons transferred, four hydrogen ions are translocated across the cytoplasmic membrane), and thus conserves the redox energy in a proton gradient. This chain is NADH-quinone oxidoreductase subunit C, found in Rhizobium leguminosarum bv. trifolii (strain WSM2304).